We begin with the raw amino-acid sequence, 269 residues long: GATA transcription factor 3 (269 aa).

The short motif at 136–143 (KPRTKRSR) is the Nuclear localization signal element. A GATA-type zinc finger spans residues 176-230 (LVFQRRCSHCGTNNTPQWRTGPVGPKTLCNACGVRFKSGRLCPEYRPADSPTFSN). A disordered region spans residues 245 to 269 (KSKELGEETGEASTKSDPVKFGSKW).

Belongs to the type IV zinc-finger family. Class A subfamily. As to expression, mostly expressed in roots. Also expressed in stems, flowers and leaves.

It is found in the nucleus. Its function is as follows. Transcriptional activator that specifically binds 5'-GATA-3' or 5'-GAT-3' motifs within gene promoters. May be involved in the regulation of some light-responsive genes. The protein is GATA transcription factor 3 (GATA3) of Arabidopsis thaliana (Mouse-ear cress).